We begin with the raw amino-acid sequence, 367 residues long: Chorismate synthase (367 aa).

NADP(+) is bound at residue R48. FMN-binding positions include 125 to 127 (RSS), 243 to 244 (NA), G283, 298 to 302 (KPTSS), and R324.

It belongs to the chorismate synthase family. In terms of assembly, homotetramer. The cofactor is FMNH2.

It catalyses the reaction 5-O-(1-carboxyvinyl)-3-phosphoshikimate = chorismate + phosphate. It participates in metabolic intermediate biosynthesis; chorismate biosynthesis; chorismate from D-erythrose 4-phosphate and phosphoenolpyruvate: step 7/7. Its function is as follows. Catalyzes the anti-1,4-elimination of the C-3 phosphate and the C-6 proR hydrogen from 5-enolpyruvylshikimate-3-phosphate (EPSP) to yield chorismate, which is the branch point compound that serves as the starting substrate for the three terminal pathways of aromatic amino acid biosynthesis. This reaction introduces a second double bond into the aromatic ring system. In Psychrobacter arcticus (strain DSM 17307 / VKM B-2377 / 273-4), this protein is Chorismate synthase.